A 200-amino-acid chain; its full sequence is ATP-dependent Clp protease proteolytic subunit (200 aa).

Ser101 (nucleophile) is an active-site residue. The active site involves His126.

Belongs to the peptidase S14 family. As to quaternary structure, component of the chloroplastic Clp protease core complex.

Its subcellular location is the plastid. The protein localises to the chloroplast stroma. It carries out the reaction Hydrolysis of proteins to small peptides in the presence of ATP and magnesium. alpha-casein is the usual test substrate. In the absence of ATP, only oligopeptides shorter than five residues are hydrolyzed (such as succinyl-Leu-Tyr-|-NHMec, and Leu-Tyr-Leu-|-Tyr-Trp, in which cleavage of the -Tyr-|-Leu- and -Tyr-|-Trp bonds also occurs).. Cleaves peptides in various proteins in a process that requires ATP hydrolysis. Has a chymotrypsin-like activity. Plays a major role in the degradation of misfolded proteins. The chain is ATP-dependent Clp protease proteolytic subunit from Ostreococcus tauri.